Consider the following 296-residue polypeptide: Haloalkane dehalogenase (296 aa).

Positions 31–155 constitute an AB hydrolase-1 domain; the sequence is PILFQHGNPT…QDRDLFQAFR (125 aa). Asp-108 (nucleophile) is an active-site residue. The active-site Proton donor is Glu-132. The active-site Proton acceptor is His-272.

The protein belongs to the haloalkane dehalogenase family. Type 2 subfamily. In terms of assembly, monomer.

Its subcellular location is the periplasm. It catalyses the reaction 1-haloalkane + H2O = a halide anion + a primary alcohol + H(+). It carries out the reaction (3R,6R)-1,3,4,6-tetrachlorocyclohexa-1,4-diene + 2 H2O = 2,5-dichlorocyclohexa-2,5-dien-1,4-diol + 2 chloride + 2 H(+). The protein operates within xenobiotic degradation; gamma-hexachlorocyclohexane degradation. Functionally, catalyzes hydrolytic cleavage of carbon-halogen bonds in halogenated aliphatic compounds, leading to the formation of the corresponding primary alcohols, halide ions and protons. Is involved in the degradation of the important environmental pollutant gamma-hexachlorocyclohexane (gamma-HCH or lindane) as it also catalyzes conversion of 1,3,4,6-tetrachloro-1,4-cyclohexadiene (1,4-TCDN) to 2,5-dichloro-2,5-cyclohexadiene-1,4-diol (2,5-DDOL) via the intermediate 2,4,5-trichloro-2,5-cyclohexadiene-1-ol (2,4,5-DNOL). In Sphingobium indicum (strain DSM 16412 / CCM 7286 / MTCC 6364 / B90A), this protein is Haloalkane dehalogenase.